Consider the following 127-residue polypeptide: MEIFGHVVSGLGEGKFFVGLTHYKNKFEELTGFTPFEGTLNVKLKHNFNLDEFNPIEFDGFEIDGKKYFGGKVLLIKLFNKQGNSINCAVVAPKKTDHSKKTLEIIAPIQLRKFLLLKNSDVVKLVI.

Residue Gly-10–Lys-15 coordinates CDP. 2 residues coordinate Mg(2+): Thr-39 and Asn-41. FMN contacts are provided by Thr-96 and Glu-104. Ile-109–Arg-112 is a CDP binding site.

This sequence belongs to the archaeal riboflavin kinase family. The cofactor is Mg(2+).

It carries out the reaction riboflavin + CTP = CDP + FMN + H(+). It participates in cofactor biosynthesis; FMN biosynthesis; FMN from riboflavin (CTP route): step 1/1. Catalyzes the CTP-dependent phosphorylation of riboflavin (vitamin B2) to form flavin mononucleotide (FMN). In Methanococcus maripaludis (strain DSM 14266 / JCM 13030 / NBRC 101832 / S2 / LL), this protein is Riboflavin kinase.